The following is a 425-amino-acid chain: DNA-directed RNA polymerase I subunit rpa49 (425 aa).

The disordered stretch occupies residues 1–26 (MAGDELKGKKRKYRDSHSGDEKSVKI). The segment covering 15 to 24 (DSHSGDEKSV) has biased composition (basic and acidic residues).

It belongs to the eukaryotic RPA49/POLR1E RNA polymerase subunit family. In terms of assembly, component of the RNA polymerase I (Pol I) complex consisting of 14 subunits.

It is found in the nucleus. The protein localises to the nucleolus. DNA-dependent RNA polymerase catalyzes the transcription of DNA into RNA using the four ribonucleoside triphosphates as substrates. Component of RNA polymerase I which synthesizes ribosomal RNA precursors. The chain is DNA-directed RNA polymerase I subunit rpa49 (rpa49) from Schizosaccharomyces pombe (strain 972 / ATCC 24843) (Fission yeast).